The chain runs to 156 residues: Small ribosomal subunit protein uS7 (156 aa).

Belongs to the universal ribosomal protein uS7 family. As to quaternary structure, part of the 30S ribosomal subunit. Contacts proteins S9 and S11.

Functionally, one of the primary rRNA binding proteins, it binds directly to 16S rRNA where it nucleates assembly of the head domain of the 30S subunit. Is located at the subunit interface close to the decoding center, probably blocks exit of the E-site tRNA. This Clostridium botulinum (strain Okra / Type B1) protein is Small ribosomal subunit protein uS7.